Here is a 274-residue protein sequence, read N- to C-terminus: Rhamnulose-1-phosphate aldolase (274 aa).

Residue Glu-117 is part of the active site. His-141, His-143, and His-212 together coordinate Zn(2+).

Belongs to the aldolase class II family. RhaD subfamily. Homotetramer. Zn(2+) is required as a cofactor.

Its subcellular location is the cytoplasm. It catalyses the reaction L-rhamnulose 1-phosphate = (S)-lactaldehyde + dihydroxyacetone phosphate. Its pathway is carbohydrate degradation; L-rhamnose degradation; glycerone phosphate from L-rhamnose: step 3/3. Catalyzes the reversible cleavage of L-rhamnulose-1-phosphate to dihydroxyacetone phosphate (DHAP) and L-lactaldehyde. The sequence is that of Rhamnulose-1-phosphate aldolase from Pectobacterium carotovorum subsp. carotovorum (strain PC1).